Here is a 526-residue protein sequence, read N- to C-terminus: Peptide chain release factor 3 (526 aa).

The 269-residue stretch at 9-277 (DKRRTFAIIS…GIVEWAPKPQ (269 aa)) folds into the tr-type G domain. Residues 18-25 (SHPDAGKT), 86-90 (DTPGH), and 140-143 (NKLD) each bind GTP.

The protein belongs to the TRAFAC class translation factor GTPase superfamily. Classic translation factor GTPase family. PrfC subfamily.

It localises to the cytoplasm. Increases the formation of ribosomal termination complexes and stimulates activities of RF-1 and RF-2. It binds guanine nucleotides and has strong preference for UGA stop codons. It may interact directly with the ribosome. The stimulation of RF-1 and RF-2 is significantly reduced by GTP and GDP, but not by GMP. The sequence is that of Peptide chain release factor 3 from Shewanella woodyi (strain ATCC 51908 / MS32).